The chain runs to 44 residues: MATQNPNQPVTYPIFTVRWLAVHTLAVPSVFFVGAIAAMQFIQR.

A helical transmembrane segment spans residues 17–41 (VRWLAVHTLAVPSVFFVGAIAAMQF). Residues R18 and H23 each coordinate heme.

It belongs to the PsbE/PsbF family. Heterodimer of an alpha subunit and a beta subunit. PSII is composed of 1 copy each of membrane proteins PsbA, PsbB, PsbC, PsbD, PsbE, PsbF, PsbH, PsbI, PsbJ, PsbK, PsbL, PsbM, PsbT, PsbX, PsbY, PsbZ, Psb30/Ycf12, peripheral proteins PsbO, CyanoQ (PsbQ), PsbU, PsbV and a large number of cofactors. It forms dimeric complexes. The cofactor is heme b.

The protein resides in the cellular thylakoid membrane. Its function is as follows. This b-type cytochrome is tightly associated with the reaction center of photosystem II (PSII). PSII is a light-driven water:plastoquinone oxidoreductase that uses light energy to abstract electrons from H(2)O, generating O(2) and a proton gradient subsequently used for ATP formation. It consists of a core antenna complex that captures photons, and an electron transfer chain that converts photonic excitation into a charge separation. The sequence is that of Cytochrome b559 subunit beta from Synechocystis sp. (strain ATCC 27184 / PCC 6803 / Kazusa).